Reading from the N-terminus, the 225-residue chain is UPF0700 transmembrane protein RA0705 (225 aa).

6 consecutive transmembrane segments (helical) span residues 17–37 (VGLA…AIGL), 66–86 (GLLL…GVMI), 95–115 (ALLF…QPEL), 117–137 (FVSL…IEGL), 168–188 (IIQI…AVLV), and 194–214 (LALW…FQIP).

This sequence belongs to the UPF0700 family.

It is found in the cell membrane. This is UPF0700 transmembrane protein RA0705 from Rhizobium meliloti (strain 1021) (Ensifer meliloti).